A 278-amino-acid chain; its full sequence is Beta-lactamase-like protein str5 (278 aa).

The chain crosses the membrane as a helical span at residues 20–37; it reads VFVLAALLSATFAFFTHT. Residue N112 is glycosylated (N-linked (GlcNAc...) asparagine).

This sequence belongs to the beta-lactamase family.

The protein resides in the membrane. It functions in the pathway mycotoxin biosynthesis. In terms of biological role, beta-lactamase-like protein; part of the gene cluster that mediates the biosynthesis of strobilurin A, an antifungal polyketide that contains a key beta-methoxyacrylate toxophore that targets the complex III of the mitochondrial electron transport chain. Strobilurin biosynthesis begins with construction of benzoyl CoA by step-wise elimination of ammonia from phenylalanine by the phenylalanine ammonia-lyase str11, oxygenation by str8 and retro-Claisen reaction to form benzoic acid, which is activated to its CoA thiolester benzoyl CoA by the dedicated CoA ligase str10. Benzoyl CoA forms the starter unit for the highly reducing polyketide synthase stpks1 that produces the polyketide prestrobilutin A. The FAD-dependent oxygenase str9 then catalyzes the key oxidative rearrangement responsible for the creation of the beta-methoxyacrylate toxophore. Str9 performs epoxidation of the 2,3 olefin of prestrobilutin A, followed by Meinwald rearrangement to furnish the aldehyde intermediate. Rapid enolization of the aldehyde intermediate would give the beta-methoxyacrylate skeleton and methylations catalyzed by str2 and str3 complete the synthesis and lead to the production of strobilurin A. The short-chain dehydrogenase stl2 and the dehydrogenase str4 play a role in the shunt pathway leading to the production of bolineol. The cluster encodes no obvious halogenase gene that could be involved in production of strobilurin B, nor any obvious dimethylallyl-transferase that could be involved in the production of strobilurin G. It is possible that unknown proteins encoded in, or near, the cluster (such as str1 or stl1) may form new classes of halogenases or dimethylally-transferases, or that the responsible genes are located elsewhere on the genome. Similarly, proteins encoded by str5/str6 hydrolases appear to have no chemical role in the biosynthesis of strobilurin A. Finally, no obvious self-resistance gene is found within the cluster. This chain is Beta-lactamase-like protein str5, found in Strobilurus tenacellus.